The following is a 642-amino-acid chain: Epithelial sodium channel subunit alpha (642 aa).

Topologically, residues 1-81 (MHQVVTVKAE…VCSKRNKMKT (81 aa)) are cytoplasmic. A helical membrane pass occupies residues 82–102 (AFWSVLFFLTFGLMYWQFGIL). The Extracellular portion of the chain corresponds to 103–553 (YREYFSFPVN…NQWSLWFGSS (451 aa)). Intrachain disulfides connect Cys130-Cys297, Cys222-Cys229, Cys274-Cys281, Cys385-Cys470, Cys407-Cys447, Cys407-Cys466, Cys411-Cys462, Cys420-Cys447, Cys420-Cys470, and Cys422-Cys436. The disordered stretch occupies residues 170-209 (GAAQSSQKRSQRSLSHHVQRHPLRRRKRNEPVSLKGNSPP). Basic residues predominate over residues 178-197 (RSQRSLSHHVQRHPLRRRKR). A helical membrane pass occupies residues 554–574 (VLSVVELAELILDFIAITIIL). Residues 575-642 (SFKRFRSRQV…RDGEAVIGLE (68 aa)) are Cytoplasmic-facing. Residues 587 to 608 (PSVPPPGAHDNTAFQSEPADPS) form a disordered region.

It belongs to the amiloride-sensitive sodium channel (TC 1.A.6) family. SCNN1A subfamily. In terms of assembly, heterotrimer; disulfide-linked and containing an alpha/SCNN1A, a beta/SCNN1B and a gamma/SCNN1G subunit.

Its subcellular location is the apical cell membrane. It is found in the cell projection. It localises to the cilium. The protein resides in the cytoplasmic granule. The protein localises to the cytoplasm. Its subcellular location is the cytoplasmic vesicle. It is found in the secretory vesicle. It localises to the acrosome. The protein resides in the flagellum. The enzyme catalyses Na(+)(in) = Na(+)(out). Its activity is regulated as follows. Originally identified and characterized by its inhibition by the diuretic drug amiloride. This is one of the three pore-forming subunits of the heterotrimeric epithelial sodium channel (ENaC), a critical regulator of sodium balance and fluid homeostasis. ENaC operates in epithelial tissues, where it mediates the electrodiffusion of sodium ions from extracellular fluid through the apical membrane of cells, with water following osmotically. In Pelodiscus sinensis (Chinese softshell turtle), this protein is Epithelial sodium channel subunit alpha.